We begin with the raw amino-acid sequence, 278 residues long: TATA box-binding protein-associated factor RNA polymerase I subunit D (278 aa).

Disordered regions lie at residues 20 to 71 and 88 to 116; these read ANRS…SSFE and KKRY…RNPI. Polar residues predominate over residues 22 to 33; it reads RSDNSSDSSLFK. Residue Ser23 is modified to Phosphoserine. Residues 88–99 are compositionally biased toward basic residues; sequence KKRYKKKKKRRY. Phosphoserine occurs at positions 138 and 234.

As to quaternary structure, component of the transcription factor SL1/TIF-IB complex, composed of TBP and at least TAF1A, TAF1B, TAF1C and TAF1D. Interacts with UBTF.

It is found in the nucleus. Its function is as follows. Component of the transcription factor SL1/TIF-IB complex, which is involved in the assembly of the PIC (preinitiation complex) during RNA polymerase I-dependent transcription. The rate of PIC formation probably is primarily dependent on the rate of association of SL1/TIF-IB with the rDNA promoter. SL1/TIF-IB is involved in stabilization of nucleolar transcription factor 1/UBTF on rDNA. Formation of SL1/TIF-IB excludes the association of TBP with TFIID subunits. This is TATA box-binding protein-associated factor RNA polymerase I subunit D (TAF1D) from Homo sapiens (Human).